The primary structure comprises 320 residues: Probable arabinan endo-1,5-alpha-L-arabinosidase C (320 aa).

The signal sequence occupies residues 1–16; it reads MYRSTLLFLFIALVNA. The Proton acceptor role is filled by Asp31. Residues Asn73, Asn137, and Asn191 are each glycosylated (N-linked (GlcNAc...) asparagine). Residue Glu199 is the Proton donor of the active site.

Belongs to the glycosyl hydrolase 43 family.

It is found in the secreted. The catalysed reaction is Endohydrolysis of (1-&gt;5)-alpha-arabinofuranosidic linkages in (1-&gt;5)-arabinans.. The protein operates within glycan metabolism; L-arabinan degradation. Its function is as follows. Endo-1,5-alpha-L-arabinanase involved in degradation of pectin. Its preferred substrate is linear 1,5-alpha-L-arabinan. This Aspergillus terreus (strain NIH 2624 / FGSC A1156) protein is Probable arabinan endo-1,5-alpha-L-arabinosidase C (abnC).